Consider the following 341-residue polypeptide: Annexin A1 isoform p35 (341 aa).

Annexin repeat units follow at residues 37–108, 109–180, 192–263, and 267–338; these read FDPS…ALLK, TPAQ…SLAK, ELAE…ALVK, and SKPA…ALCG.

It belongs to the annexin family. In terms of processing, in contrast to mammalian homologs, does not contain a tyrosine phosphorylation site in the N-terminal part.

Its subcellular location is the nucleus. The protein localises to the cytoplasm. It localises to the cell projection. The protein resides in the cilium. It is found in the basolateral cell membrane. Calcium/phospholipid-binding protein which promotes membrane fusion and is involved in exocytosis. This protein regulates phospholipase A2 activity. It seems to bind from two to four calcium ions with high affinity. The polypeptide is Annexin A1 isoform p35 (CP35) (Columba livia (Rock dove)).